The chain runs to 369 residues: S-(hydroxymethyl)glutathione dehydrogenase (369 aa).

Zn(2+) is bound by residues cysteine 40, histidine 62, cysteine 92, cysteine 95, cysteine 98, cysteine 106, and cysteine 169.

Belongs to the zinc-containing alcohol dehydrogenase family. Class-III subfamily. Homodimer. The cofactor is Zn(2+).

It is found in the cytoplasm. The catalysed reaction is S-(hydroxymethyl)glutathione + NADP(+) = S-formylglutathione + NADPH + H(+). It carries out the reaction S-(hydroxymethyl)glutathione + NAD(+) = S-formylglutathione + NADH + H(+). It catalyses the reaction a primary alcohol + NAD(+) = an aldehyde + NADH + H(+). The enzyme catalyses a secondary alcohol + NAD(+) = a ketone + NADH + H(+). The catalysed reaction is S-nitrosoglutathione + NADH + H(+) = S-(hydroxysulfenamide)glutathione + NAD(+). Its function is as follows. Has high formaldehyde dehydrogenase activity in the presence of glutathione and catalyzes the oxidation of normal alcohols in a reaction that is not GSH-dependent. In addition, hemithiolacetals other than those formed from GSH, including omega-thiol fatty acids, also are substrates. Also acts as a S-nitroso-glutathione reductase by catalyzing the NADH-dependent reduction of S-nitrosoglutathione. The sequence is that of S-(hydroxymethyl)glutathione dehydrogenase (frmA) from Escherichia coli O6:H1 (strain CFT073 / ATCC 700928 / UPEC).